The following is a 58-amino-acid chain: MLGWTLVFLVVAVIAGLLGFTGIAGAAAGIAKIIFFVFIVLLVISLLVNAFRGKSPRL.

The next 2 helical transmembrane spans lie at 6 to 26 and 28 to 48; these read LVFL…IAGA and AGIA…SLLV.

It belongs to the UPF0391 family.

It localises to the cell membrane. In Shewanella baltica (strain OS195), this protein is UPF0391 membrane protein Sbal195_1447.